A 520-amino-acid polypeptide reads, in one-letter code: MKKSHLVKRGLQDANQPSSQPDKVGWIRRFSGKGIFREIWRNRFVMLKGDHLFIFEKEMKNNGKTHEVFDLVHYERSEELRKAKSHSKKNHSKFTLLRCQHPGNKSPNLVFLAVSPEEKESWINVLNTAITRAKNRVLDEVTIEEESLLAHPTRDRAKIPLGRRLPTRGHLMAVGSASSDGMLTLDLVNEEDAAMLDEDEWLKDHRASLDKLAPGRRRAGTDASRPPASNTEAQEKTSSLPRKSEISWSQEDHPRTPQNKKKFAQVRNRCASMDDALSRGERKPKKNIPSPTGHLQDLITQRLQRTQELLAQIQEQEPHRGRMGSYPYLRGIDSPRLRHLKGSDSPHSKGSSSPHSANSPSVRAKDSPSSKSKESPHAKSKDSPRFKSSKNALRSKSIDSPDSKESSSLHMKCIDLTHIKGSQSPLSTGSNSPHMKSTDFYQMSYSPNFRNMKGGDSPLGEALDWDSRRAAAERLLQEAISSWREAKEVLAEVKELQARQRREELSKTGMASQKLQQKSP.

4 disordered regions span residues 1 to 23 (MKKS…QPDK), 208 to 296 (SLDK…GHLQ), 313 to 439 (IQEQ…KSTD), and 497 to 520 (QARQ…QKSP). A PH domain is found at 20 to 131 (QPDKVGWIRR…WINVLNTAIT (112 aa)). Positions 227-241 (PASNTEAQEKTSSLP) are enriched in polar residues. Basic and acidic residues-rich tracts occupy residues 242 to 255 (RKSE…DHPR) and 333 to 347 (DSPR…DSPH). Residues 348–361 (SKGSSSPHSANSPS) are compositionally biased toward low complexity. 2 stretches are compositionally biased toward basic and acidic residues: residues 363–385 (RAKD…DSPR) and 396–418 (KSID…DLTH). The segment covering 420–439 (KGSQSPLSTGSNSPHMKSTD) has biased composition (polar residues). Basic and acidic residues predominate over residues 497-506 (QARQRREELS). Positions 509-520 (GMASQKLQQKSP) are enriched in polar residues.

In terms of processing, C-terminal fragments could be released during apoptosis via caspase-3-dependent cleavage.

Its subcellular location is the membrane. The protein resides in the nucleus. It localises to the cytoplasm. Its function is as follows. Plays a role in the regulation of the actin cytoskeleton through its interactions with actin capping protein (CP). This Danio rerio (Zebrafish) protein is Pleckstrin homology domain-containing family O member 1-A (plekho1a).